We begin with the raw amino-acid sequence, 267 residues long: Thiamine thiazole synthase (267 aa).

NAD(+) contacts are provided by residues S41, 60-61 (ER), G68, V132, and 160-162 (HVD). Fe cation contacts are provided by D162 and H177. M227 contributes to the NAD(+) binding site. R237 contacts glycine.

This sequence belongs to the THI4 family. As to quaternary structure, homooctamer; tetramer of dimers. Requires Fe(2+) as cofactor.

The catalysed reaction is hydrogen sulfide + glycine + NAD(+) = ADP-5-ethyl-4-methylthiazole-2-carboxylate + nicotinamide + 3 H2O + H(+). The protein operates within cofactor biosynthesis; thiamine diphosphate biosynthesis. Functionally, involved in the biosynthesis of the thiazole moiety of thiamine. Catalyzes the conversion of NAD and glycine to adenosine diphosphate 5-(2-hydroxyethyl)-4-methylthiazole-2-carboxylate (ADT), an adenylated thiazole intermediate, using free sulfide as a source of sulfur. The chain is Thiamine thiazole synthase from Saccharolobus solfataricus (strain ATCC 35092 / DSM 1617 / JCM 11322 / P2) (Sulfolobus solfataricus).